Here is a 183-residue protein sequence, read N- to C-terminus: Ubiquitin carboxyl-terminal hydrolase 17-like protein 23 (183 aa).

A USP domain is found at 80–183; the sequence is AGLQNMGNTC…KACLPGHKQV (104 aa).

This sequence belongs to the peptidase C19 family. USP17 subfamily.

The protein resides in the nucleus. The protein localises to the endoplasmic reticulum. This is Ubiquitin carboxyl-terminal hydrolase 17-like protein 23 (USP17L23) from Homo sapiens (Human).